The primary structure comprises 230 residues: uncharacterized protein (230 aa).

To E.coli HemX N-terminal region.

This is an uncharacterized protein from Haemophilus influenzae (strain ATCC 51907 / DSM 11121 / KW20 / Rd).